Here is a 453-residue protein sequence, read N- to C-terminus: Probable L-galactonate transporter (453 aa).

The tract at residues 1 to 23 is disordered; sequence MEKENITIDPRSSFTPSSSADIP. Residues 1 to 42 are Periplasmic-facing; the sequence is MEKENITIDPRSSFTPSSSADIPVPPDGLVQRSTRIKRIQTT. The span at 10–20 shows a compositional bias: polar residues; that stretch reads PRSSFTPSSSA. A helical transmembrane segment spans residues 43-63; the sequence is AMLLLFFAAVINYLDRSSLSV. Over 64–71 the chain is Cytoplasmic; it reads ANLTIREE. Residues 72-92 traverse the membrane as a helical segment; it reads LGLSATEIGALLSVFSLAYGI. Residues 93-107 lie on the Periplasmic side of the membrane; it reads AQLPCGPLLDRKGPR. A helical membrane pass occupies residues 108–128; it reads LMLGLGMFFWSLFQAMSGMVH. At 129–174 the chain is on the cytoplasmic side; it reads NFTQFVLVRIGMGIGEAPMNPCGVKVINDWFNIKERGRPMGFFNAA. Residues 175 to 195 traverse the membrane as a helical segment; sequence STIGVAVSPPILAAMMLVMGW. Arginine 196 is a topological domain (periplasmic). A helical transmembrane segment spans residues 197-217; it reads GMFITIGVLGIFLAIGWYMLY. The Cytoplasmic portion of the chain corresponds to 218-259; it reads RNREHVELTAVEQAYLNAGSVNARRDPLSFAEWRSLFRNRTM. The chain crosses the membrane as a helical span at residues 260–280; the sequence is WGMMLGFSGINYTAWLYLAWL. The Periplasmic portion of the chain corresponds to 281–295; the sequence is PGYLQTAYNLDLKST. Residues 296–316 traverse the membrane as a helical segment; sequence GLMAAIPFLFGAAGMLVNGYV. Topologically, residues 317–332 are cytoplasmic; sequence TDWLVKGGMAPIKSRK. Residues 333–353 traverse the membrane as a helical segment; that stretch reads ICIIAGMFCSAAFTLIVPQAT. Residues 354-359 lie on the Periplasmic side of the membrane; the sequence is TSMTAV. A helical membrane pass occupies residues 360–380; the sequence is LLIGMALFCIHFAGTSCWGLI. Over 381-394 the chain is Cytoplasmic; it reads HVAVASRMTASVGS. Residues 395–415 form a helical membrane-spanning segment; sequence IQNFASFICASFAPIITGFIV. The Periplasmic portion of the chain corresponds to 416 to 422; sequence DTTHSFR. A helical transmembrane segment spans residues 423–443; that stretch reads LALIICGCVTAAGALAYIFLV. The Cytoplasmic portion of the chain corresponds to 444-453; it reads RQPINDPRKD.

It belongs to the major facilitator superfamily. Phthalate permease family.

The protein localises to the cell inner membrane. The catalysed reaction is L-galactonate(in) + H(+)(in) = L-galactonate(out) + H(+)(out). Functionally, probably responsible for the transport of L-galactonate from the periplasm across the inner membrane. Is essential for growth on L-galactonate as the sole carbon source. In Escherichia coli (strain K12), this protein is Probable L-galactonate transporter (lgoT).